The primary structure comprises 470 residues: Pyruvate kinase I (470 aa).

Position 32 (arginine 32) interacts with substrate. K(+)-binding residues include asparagine 34, serine 36, aspartate 66, and threonine 67. 34–37 lines the ATP pocket; that stretch reads NFSH. ATP-binding residues include arginine 73 and lysine 156. Lysine 220 contacts substrate. Glutamate 222 contributes to the Mg(2+) binding site. Substrate contacts are provided by glycine 245, aspartate 246, and threonine 278. Aspartate 246 lines the Mg(2+) pocket.

This sequence belongs to the pyruvate kinase family. As to quaternary structure, homotetramer. Mg(2+) serves as cofactor. It depends on K(+) as a cofactor.

It carries out the reaction pyruvate + ATP = phosphoenolpyruvate + ADP + H(+). The protein operates within carbohydrate degradation; glycolysis; pyruvate from D-glyceraldehyde 3-phosphate: step 5/5. With respect to regulation, belongs to type I PK; fructose 1,6-bisphosphate-activated. In terms of biological role, catalyzes the formation of pyruvate in the last step of glycolysis, it is irreversible under physiological conditions. The reaction is critical for the control of metabolic flux in the second part of glycolysis. The chain is Pyruvate kinase I (pykF) from Salmonella typhimurium (strain LT2 / SGSC1412 / ATCC 700720).